A 150-amino-acid polypeptide reads, in one-letter code: Large ribosomal subunit protein bL9 (150 aa).

Belongs to the bacterial ribosomal protein bL9 family.

Functionally, binds to the 23S rRNA. This chain is Large ribosomal subunit protein bL9, found in Shewanella piezotolerans (strain WP3 / JCM 13877).